A 121-amino-acid polypeptide reads, in one-letter code: NAD(P)H-quinone oxidoreductase subunit 3, chloroplastic (121 aa).

3 helical membrane passes run 10–30 (FWAF…VSNL), 65–85 (MFAL…PWAM), and 90–110 (LGII…IGLI).

The protein belongs to the complex I subunit 3 family. NDH is composed of at least 16 different subunits, 5 of which are encoded in the nucleus.

The protein resides in the plastid. Its subcellular location is the chloroplast thylakoid membrane. The catalysed reaction is a plastoquinone + NADH + (n+1) H(+)(in) = a plastoquinol + NAD(+) + n H(+)(out). It catalyses the reaction a plastoquinone + NADPH + (n+1) H(+)(in) = a plastoquinol + NADP(+) + n H(+)(out). Its function is as follows. NDH shuttles electrons from NAD(P)H:plastoquinone, via FMN and iron-sulfur (Fe-S) centers, to quinones in the photosynthetic chain and possibly in a chloroplast respiratory chain. The immediate electron acceptor for the enzyme in this species is believed to be plastoquinone. Couples the redox reaction to proton translocation, and thus conserves the redox energy in a proton gradient. In Staurastrum punctulatum (Green alga), this protein is NAD(P)H-quinone oxidoreductase subunit 3, chloroplastic.